Here is a 444-residue protein sequence, read N- to C-terminus: Acyl-CoA 6-desaturase (444 aa).

Topologically, residues 1 to 131 (MGKGGNQGEG…DMNLFKTNHV (131 aa)) are cytoplasmic. Positions 18-95 (MPTFSWEEIQ…LKPLLIGELA (78 aa)) constitute a Cytochrome b5 heme-binding domain. The chain crosses the membrane as a helical span at residues 132–152 (FFLLLLAHIIALESIAWFTVF). Residues 153–157 (YFGNG) are Lumenal-facing. A helical membrane pass occupies residues 158 to 178 (WIPTLITAFVLATSQAQAGWL). Topologically, residues 179 to 264 (QHDYGHLSVY…KYLPYNHQHE (86 aa)) are cytoplasmic. The short motif at 180–184 (HDYGH) is the Histidine box-1 element. Positions 217-221 (HFQHH) match the Histidine box-2 motif. The chain crosses the membrane as a helical span at residues 265–285 (YFFLIGPPLLIPMYFQYQIIM). Over 286–305 (TMIVHKNWVDLAWAISYYIR) the chain is Lumenal. Residues 306–326 (FFVTYIPFYGILGALLFLNFI) traverse the membrane as a helical segment. Residues 327–444 (RFLESHWFVW…KLWLDAYLHK (118 aa)) lie on the Cytoplasmic side of the membrane. The short motif at 382–386 (QIEHH) is the Histidine box-3 element.

It belongs to the fatty acid desaturase type 1 family.

It is found in the endoplasmic reticulum membrane. The catalysed reaction is (9Z,12Z)-octadecadienoyl-CoA + 2 Fe(II)-[cytochrome b5] + O2 + 2 H(+) = (6Z,9Z,12Z)-octadecatrienoyl-CoA + 2 Fe(III)-[cytochrome b5] + 2 H2O. The enzyme catalyses (9Z,12Z,15Z)-octadecatrienoyl-CoA + 2 Fe(II)-[cytochrome b5] + O2 + 2 H(+) = (6Z,9Z,12Z,15Z)-octadecatetraenoyl-CoA + 2 Fe(III)-[cytochrome b5] + 2 H2O. It carries out the reaction (9Z,12Z,15Z,18Z,21Z)-tetracosapentaenoyl-CoA + 2 Fe(II)-[cytochrome b5] + O2 + 2 H(+) = (6Z,9Z,12Z,15Z,18Z,21Z)-tetracosahexaenoyl-CoA + 2 Fe(III)-[cytochrome b5] + 2 H2O. It catalyses the reaction (11E)-octadecenoyl-CoA + 2 Fe(II)-[cytochrome b5] + O2 + 2 H(+) = (6Z,11E)-octadecadienoyl-CoA + 2 Fe(III)-[cytochrome b5] + 2 H2O. The catalysed reaction is (11Z,14Z)-eicosadienoyl-CoA + 2 Fe(II)-[cytochrome b5] + O2 + 2 H(+) = (8Z,11Z,14Z)-eicosatrienoyl-CoA + 2 Fe(III)-[cytochrome b5] + 2 H2O. The enzyme catalyses (11Z,14Z,17Z)-eicosatrienoyl-CoA + 2 Fe(II)-[cytochrome b5] + O2 + 2 H(+) = (8Z,11Z,14Z,17Z)-eicosatetraenoyl-CoA + 2 Fe(III)-[cytochrome b5] + 2 H2O. It participates in lipid metabolism; polyunsaturated fatty acid biosynthesis. Involved in the biosynthesis of highly unsaturated fatty acids (HUFA) from the essential polyunsaturated fatty acids (PUFA) linoleic acid (LA) (18:2n-6) and alpha-linolenic acid (ALA) (18:3n-3) precursors, acting as a fatty acyl-coenzyme A (CoA) desaturase that introduces a cis double bond at carbon 6 of the fatty acyl chain. Catalyzes the first and rate limiting step in this pathway which is the desaturation of LA (18:2n-6) and ALA (18:3n-3) into gamma-linoleate (GLA) (18:3n-6) and stearidonate (18:4n-3), respectively. Subsequently, in the biosynthetic pathway of HUFA n-3 series, it desaturates tetracosapentaenoate (24:5n-3) to tetracosahexaenoate (24:6n-3), which is then converted to docosahexaenoate (DHA)(22:6n-3), an important lipid for nervous system function. It can also desaturate (11E)-octadecenoate (trans-vaccenoate) at carbon 6 generating (6Z,11E)-octadecadienoate. In addition to Delta-6 activity, this enzyme exhibits Delta-8 activity with slight biases toward n-3 fatty acyl-CoA substrates. This Macaca fascicularis (Crab-eating macaque) protein is Acyl-CoA 6-desaturase (FADS2).